The chain runs to 297 residues: Syntaxin-4 (297 aa).

A compositionally biased stretch (basic and acidic residues) spans 1-12; sequence MRDRTHELRQGD. Positions 1 to 21 are disordered; that stretch reads MRDRTHELRQGDDSSDEEDKE. Over 1–275 the chain is Cytoplasmic; it reads MRDRTHELRQ…QKKARKKKVL (275 aa). Phosphoserine is present on residues Ser14 and Ser15. Thr31 is subject to Phosphothreonine. A phosphoserine mark is found at Ser36, Ser117, Ser208, and Ser248. Residues 43–163 are a coiled coil; it reads HKVRTIRQTI…ERIRRQLKIT (121 aa). The interval 154-297 is interaction with CENPF; that stretch reads ERIRRQLKIT…AVIIGVTVVG (144 aa). In terms of domain architecture, t-SNARE coiled-coil homology spans 200-262; that stretch reads LNEISARHSE…ERGQEHVKTA (63 aa). A helical; Anchor for type IV membrane protein membrane pass occupies residues 276–296; it reads IAICVSITVVLLAVIIGVTVV. Gly297 is a topological domain (extracellular).

Belongs to the syntaxin family. As to quaternary structure, component of the SNARE complex composed of STX4, SNAP23 and VAMP7 that interacts with SYT7 during lysosomal exocytosis. Found in a complex with VAMP8 and SNAP23. Detected in a complex with SNAP23 and STXBP4. Interacts with VAMP2. Interacts with SNAP23 and SNAPIN. Interacts with LLGL1. Interacts (via C-terminus) with CENPF. Interacts with DOC2B. Interacts with STXBP6. Interacts with STXBP3; excludes interaction with DOC2B and SNAP25. Interacts with STXBP4; excludes interaction with VAMP2. Interacts with STXBP5L. In terms of tissue distribution, expressed in neutrophils and neutrophil-differentiated HL-60 cells. Expression in neutrophils increases with differentiation.

The protein resides in the cell membrane. Its subcellular location is the cell projection. It is found in the neuron projection. The protein localises to the stereocilium. Plasma membrane t-SNARE that mediates docking of transport vesicles. Necessary for the translocation of SLC2A4 from intracellular vesicles to the plasma membrane. In neurons, recruited at neurite tips to membrane domains rich in the phospholipid 1-oleoyl-2-palmitoyl-PC (OPPC) which promotes neurite tip surface expression of the dopamine transporter SLC6A3/DAT by facilitating fusion of SLC6A3-containing transport vesicles with the plasma membrane. Together with STXB3 and VAMP2, may also play a role in docking/fusion of intracellular GLUT4-containing vesicles with the cell surface in adipocytes and in docking of synaptic vesicles at presynaptic active zones. Required for normal hearing. This Homo sapiens (Human) protein is Syntaxin-4 (STX4).